Consider the following 342-residue polypeptide: S-adenosylmethionine:tRNA ribosyltransferase-isomerase (342 aa).

This sequence belongs to the QueA family. As to quaternary structure, monomer.

It localises to the cytoplasm. It carries out the reaction 7-aminomethyl-7-carbaguanosine(34) in tRNA + S-adenosyl-L-methionine = epoxyqueuosine(34) in tRNA + adenine + L-methionine + 2 H(+). The protein operates within tRNA modification; tRNA-queuosine biosynthesis. Its function is as follows. Transfers and isomerizes the ribose moiety from AdoMet to the 7-aminomethyl group of 7-deazaguanine (preQ1-tRNA) to give epoxyqueuosine (oQ-tRNA). The protein is S-adenosylmethionine:tRNA ribosyltransferase-isomerase of Geobacillus kaustophilus (strain HTA426).